The chain runs to 325 residues: Retinal homeobox protein Rx-B (325 aa).

The Octapeptide motif motif lies at 32–39 (HSIEAILG). Positions 75 to 87 (TEEIHPQQEHLED) are enriched in basic and acidic residues. Residues 75–136 (TEEIHPQQEH…KKKHRRNRTT (62 aa)) form a disordered region. Positions 99-117 (AKTSSECLSPGLSTSNSDN) are enriched in polar residues. The segment at residues 130–189 (HRRNRTTFTTYQLHELERAFEKSHYPDVYSREELAMKVNLPEVRVQVWFQNRRAKWRRQE) is a DNA-binding region (homeobox). The OAR signature appears at 302 to 315 (NSIASLRMKAKEHI). A Nuclear localization signal motif is present at residues 308-312 (RMKAK).

It belongs to the paired homeobox family. Bicoid subfamily. In terms of tissue distribution, highly expressed in anterior neural plate followed by neural retina, pigmented epithelium, in pineal gland, diencephalon floor and epiphysis. At later stages, the neuroretina remains the primary site of expression. No expression in the developing lens and cornea.

Its subcellular location is the nucleus. Plays a critical role in eye formation by regulating the initial specification of retinal cells and/or their subsequent proliferation. The chain is Retinal homeobox protein Rx-B (rax-b) from Xenopus laevis (African clawed frog).